Reading from the N-terminus, the 322-residue chain is HPr kinase/phosphorylase (322 aa).

Active-site residues include His-146 and Lys-167. 161-168 is an ATP binding site; the sequence is GDSGLGKS. Ser-168 provides a ligand contact to Mg(2+). Catalysis depends on Asp-185, which acts as the Proton acceptor; for phosphorylation activity. Proton donor; for dephosphorylation activity. An important for the catalytic mechanism of both phosphorylation and dephosphorylation region spans residues 209-218; sequence LEVRGLGLLD. Glu-210 contributes to the Mg(2+) binding site. Residue Arg-250 is part of the active site. An important for the catalytic mechanism of dephosphorylation region spans residues 271–276; the sequence is QVAAGR.

The protein belongs to the HPrK/P family. In terms of assembly, homohexamer. Mg(2+) serves as cofactor.

It carries out the reaction [HPr protein]-L-serine + ATP = [HPr protein]-O-phospho-L-serine + ADP + H(+). The enzyme catalyses [HPr protein]-O-phospho-L-serine + phosphate + H(+) = [HPr protein]-L-serine + diphosphate. Catalyzes the ATP- as well as the pyrophosphate-dependent phosphorylation of a specific serine residue in HPr, a phosphocarrier protein of the phosphoenolpyruvate-dependent sugar phosphotransferase system (PTS). HprK/P also catalyzes the pyrophosphate-producing, inorganic phosphate-dependent dephosphorylation (phosphorolysis) of seryl-phosphorylated HPr (P-Ser-HPr). In Paraburkholderia xenovorans (strain LB400), this protein is HPr kinase/phosphorylase.